The primary structure comprises 967 residues: uncharacterized protein (967 aa).

Disordered regions lie at residues 1–23 (MQNAPKCYLPNSRKGRDVNFHDR) and 41–72 (FTMHSESIGPKSLDSLSPRRLSNYSSAVDPRT). The span at 14–23 (KGRDVNFHDR) shows a compositional bias: basic and acidic residues. Polar residues predominate over residues 60-72 (RLSNYSSAVDPRT). S86 carries the post-translational modification Phosphoserine. Disordered regions lie at residues 135–259 (AVSE…QHLP), 271–296 (SVSRSYQSPASTPRSSVSSVSSSPPE), 380–399 (DSTTEYVNTESSSKTPAPHK), 437–464 (HSYGSPKSLHHKSSSAGERPVSPTFVAD), and 499–544 (GTRF…KSLS). Residues 162-187 (ESSTSNNLETGNSTNTALHNVSSPLE) show a composition bias toward polar residues. Over residues 205-218 (HDLDEVISEKDTSL) the composition is skewed to basic and acidic residues. A compositionally biased stretch (basic residues) spans 221–234 (RSSRGRSSAPKRRK). Low complexity predominate over residues 278 to 294 (SPASTPRSSVSSVSSSP). Residues 382–394 (TTEYVNTESSSKT) show a composition bias toward polar residues. Residues 499-508 (GTRFHSRSSH) show a composition bias toward basic residues. A Phosphoserine modification is found at S585. Disordered stretches follow at residues 594-665 (ESNE…SVND) and 681-708 (DHRIPASDNQNNNNNDANALAENSESQH). Basic and acidic residues predominate over residues 608–622 (YDSRESTGHTIKELR). Over residues 686-704 (ASDNQNNNNNDANALAENS) the composition is skewed to low complexity. 728–736 (PCVLDVKMG) provides a ligand contact to substrate.

The protein belongs to the inositol phosphokinase (IPK) family.

The protein localises to the cytoplasm. This is an uncharacterized protein from Schizosaccharomyces pombe (strain 972 / ATCC 24843) (Fission yeast).